The sequence spans 1690 residues: DNA-directed RNA polymerase subunit beta' (1690 aa).

Cys-63, Cys-65, Cys-78, and Cys-81 together coordinate Zn(2+). The Mg(2+) site is built by Asp-753, Asp-755, and Asp-757. 4 residues coordinate Zn(2+): Cys-1107, Cys-1295, Cys-1302, and Cys-1305.

Belongs to the RNA polymerase beta' chain family. The RNAP catalytic core consists of 2 alpha, 1 beta, 1 beta' and 1 omega subunit. When a sigma factor is associated with the core the holoenzyme is formed, which can initiate transcription. Mg(2+) is required as a cofactor. The cofactor is Zn(2+).

The catalysed reaction is RNA(n) + a ribonucleoside 5'-triphosphate = RNA(n+1) + diphosphate. DNA-dependent RNA polymerase catalyzes the transcription of DNA into RNA using the four ribonucleoside triphosphates as substrates. This chain is DNA-directed RNA polymerase subunit beta', found in Thermotoga neapolitana (strain ATCC 49049 / DSM 4359 / NBRC 107923 / NS-E).